The chain runs to 466 residues: Fumarate hydratase class II (466 aa).

Substrate-binding positions include 99–101, 129–132, 139–141, and threonine 187; these read SGT, HPND, and SSN. The active-site Proton donor/acceptor is the histidine 188. Serine 318 is a catalytic residue. Residues serine 319 and 324-326 each bind substrate; that span reads KVN.

Belongs to the class-II fumarase/aspartase family. Fumarase subfamily. In terms of assembly, homotetramer.

It is found in the cytoplasm. The enzyme catalyses (S)-malate = fumarate + H2O. It functions in the pathway carbohydrate metabolism; tricarboxylic acid cycle; (S)-malate from fumarate: step 1/1. In terms of biological role, involved in the TCA cycle. Catalyzes the stereospecific interconversion of fumarate to L-malate. This chain is Fumarate hydratase class II, found in Thermus aquaticus.